We begin with the raw amino-acid sequence, 660 residues long: Methionine--tRNA ligase 1 (660 aa).

Positions 15 to 25 (YYPSGKLHIGH) match the 'HIGH' region motif. Positions 310-314 (KMSKS) match the 'KMSKS' region motif. Lys313 lines the ATP pocket. The region spanning 560–660 (DFFKVELRVA…QNLPNGTKIK (101 aa)) is the tRNA-binding domain.

It belongs to the class-I aminoacyl-tRNA synthetase family. MetG type 2B subfamily. As to quaternary structure, homodimer.

It localises to the cytoplasm. It catalyses the reaction tRNA(Met) + L-methionine + ATP = L-methionyl-tRNA(Met) + AMP + diphosphate. Is required not only for elongation of protein synthesis but also for the initiation of all mRNA translation through initiator tRNA(fMet) aminoacylation. This chain is Methionine--tRNA ligase 1, found in Bacillus cereus (strain ATCC 14579 / DSM 31 / CCUG 7414 / JCM 2152 / NBRC 15305 / NCIMB 9373 / NCTC 2599 / NRRL B-3711).